Here is a 202-residue protein sequence, read N- to C-terminus: Large ribosomal subunit protein uL18 (202 aa).

This sequence belongs to the universal ribosomal protein uL18 family. In terms of assembly, part of the 50S ribosomal subunit. Contacts the 5S and 23S rRNAs.

Its function is as follows. This is one of the proteins that bind and probably mediate the attachment of the 5S RNA into the large ribosomal subunit, where it forms part of the central protuberance. This is Large ribosomal subunit protein uL18 from Methanopyrus kandleri (strain AV19 / DSM 6324 / JCM 9639 / NBRC 100938).